The chain runs to 1129 residues: Egg-laying defective protein 27 (1129 aa).

Positions 1 to 11 (MSRFDSQCSSE) are enriched in polar residues. Residues 1 to 43 (MSRFDSQCSSEDVNKEDECVPSSSEDSQDGVSSPMENDDEPEF) form a disordered region. The span at 22-33 (SSSEDSQDGVSS) shows a compositional bias: low complexity. The BAH domain occupies 87 to 223 (TLYRLRDSVF…QDSTKLASTH (137 aa)). Positions 224–327 (YAIRVGTSFQ…DALSELNAND (104 aa)) constitute an ELM2 domain. One can recognise an SANT domain in the interval 332–384 (TDVDNMTQDDAKKFAKGIKQLGKNFSRIHRELLPHHSREQLVSYYYLWKKTPE). A disordered region spans residues 388 to 434 (PKQAARRVNPTSIKRPTKEKVKASRPTSTEYLDFDSASESDVENNGP). Residues 419–429 (LDFDSASESDV) show a composition bias toward acidic residues. The segment at 439 to 485 (CHHCYGAESKDWHHANGLLLCTDCRLHYKKYGQLRQIANRPSQVPAC) adopts a GATA-type; atypical zinc-finger fold. 5 disordered regions span residues 488–636 (KRSN…DPMP), 693–717 (RDETNGETNSDLKDDENVEPDSPED), 790–814 (QQNQIKKEQQQSQPTPQQIHQQQAQ), 899–950 (MIAE…HAAA), and 982–1040 (MAAQ…REHA). Polar residues-rich tracts occupy residues 525 to 545 (PSTVSNGAPNLTAEETPTKKL) and 561 to 573 (VINNVEKSNSSEE). Composition is skewed to acidic residues over residues 613–634 (SYDDDDDEEEGKMTIDEGDDDP) and 705–717 (KDDENVEPDSPED). A compositionally biased stretch (low complexity) spans 899–914 (MIAEQQQQQRHAAAQQ). Residues 915–932 (LREREQREQRERERERQH) show a composition bias toward basic and acidic residues. Composition is skewed to low complexity over residues 933 to 950 (QQQAQQALHQQQQQHAAA) and 983 to 999 (AAQQQQQQQQAAQAQAQ). A compositionally biased stretch (basic and acidic residues) spans 1000-1040 (RDQERERREREAREREAAREREREQAAREAAARDQAAREHA).

As to quaternary structure, interacts with ceh-6, sem-4 and sox-2. Interacts with wdr-5.1. Expression detected in anterior intestine and head region.

The protein resides in the nucleus. Functionally, transcription factor which promotes stress survival and delays aging. Required for cell cycle progression and development of the mesodermal and endodermal embryonic lineages. Required for normal T-cell polarity, for correct migration of QL neuroblast descendants and other cells, for embryonic patterning and for the embryonic expression of hlh-8. Also required for the transdifferentiation of the Y rectal epithelial cell to the PDA motor neuron during larval development. This is Egg-laying defective protein 27 from Caenorhabditis elegans.